The following is a 207-amino-acid chain: Carbonic anhydrase 2 (207 aa).

Residues Cys51, Asp53, His104, and Cys107 each contribute to the Zn(2+) site.

The protein belongs to the beta-class carbonic anhydrase family. Zn(2+) serves as cofactor.

It catalyses the reaction hydrogencarbonate + H(+) = CO2 + H2O. Catalyzes the reversible hydration of carbon dioxide to form bicarbonate. The protein is Carbonic anhydrase 2 (mtcA2) of Mycobacterium tuberculosis (strain CDC 1551 / Oshkosh).